A 108-amino-acid polypeptide reads, in one-letter code: UPF0102 protein Sden_0272 (108 aa).

It belongs to the UPF0102 family.

This is UPF0102 protein Sden_0272 from Shewanella denitrificans (strain OS217 / ATCC BAA-1090 / DSM 15013).